A 513-amino-acid chain; its full sequence is Coniferin beta-glucosidase (513 aa).

An N-terminal signal peptide occupies residues 1–23; the sequence is MEVSVLMWVLLFYSLLGFQVTTA. Residues Q44, H145, and 190-191 contribute to the a beta-D-glucoside site; that span reads NE. E191 serves as the catalytic Proton donor. C210 and C219 are joined by a disulfide. A glycan (N-linked (GlcNAc...) asparagine) is linked at N223. A beta-D-glucoside contacts are provided by Y336 and E408. E408 functions as the Nucleophile in the catalytic mechanism. N447 carries an N-linked (GlcNAc...) asparagine glycan. Residues W457, 464–465, and F473 contribute to the a beta-D-glucoside site; that span reads EW.

This sequence belongs to the glycosyl hydrolase 1 family. In terms of assembly, homodimer. Glycosylated.

It catalyses the reaction 4-O-(beta-D-glucosyl)-(E)-coniferol + H2O = (E)-coniferol + D-glucose. With respect to regulation, inhibited by glucono-1,5-lactone, but not by bromoconduritol or conduritol B epoxide. Its function is as follows. Involved in the release of monolignols for lignin biosynthesis. Unable to hydrolyze 4-nitrophenyl beta-cellobioside or alpha-linked methylumbelliferyl glucoside. In Pinus contorta (Shore pine), this protein is Coniferin beta-glucosidase.